The primary structure comprises 106 residues: Iron-sulfur cluster assembly protein CyaY (106 aa).

This sequence belongs to the frataxin family.

In terms of biological role, involved in iron-sulfur (Fe-S) cluster assembly. May act as a regulator of Fe-S biogenesis. This Escherichia fergusonii (strain ATCC 35469 / DSM 13698 / CCUG 18766 / IAM 14443 / JCM 21226 / LMG 7866 / NBRC 102419 / NCTC 12128 / CDC 0568-73) protein is Iron-sulfur cluster assembly protein CyaY.